The sequence spans 256 residues: Deoxyribose-phosphate aldolase (256 aa).

Asp-102 serves as the catalytic Proton donor/acceptor. Lys-165 acts as the Schiff-base intermediate with acetaldehyde in catalysis. Lys-197 functions as the Proton donor/acceptor in the catalytic mechanism.

This sequence belongs to the DeoC/FbaB aldolase family. DeoC type 2 subfamily.

It localises to the cytoplasm. It carries out the reaction 2-deoxy-D-ribose 5-phosphate = D-glyceraldehyde 3-phosphate + acetaldehyde. It participates in carbohydrate degradation; 2-deoxy-D-ribose 1-phosphate degradation; D-glyceraldehyde 3-phosphate and acetaldehyde from 2-deoxy-alpha-D-ribose 1-phosphate: step 2/2. Its function is as follows. Catalyzes a reversible aldol reaction between acetaldehyde and D-glyceraldehyde 3-phosphate to generate 2-deoxy-D-ribose 5-phosphate. The sequence is that of Deoxyribose-phosphate aldolase from Shewanella sp. (strain ANA-3).